Reading from the N-terminus, the 138-residue chain is Small ribosomal subunit protein uS11c (138 aa).

It belongs to the universal ribosomal protein uS11 family. In terms of assembly, part of the 30S ribosomal subunit.

The protein localises to the plastid. It is found in the chloroplast. The protein is Small ribosomal subunit protein uS11c of Illicium oligandrum (Star anise).